The sequence spans 649 residues: Threonine--tRNA ligase (649 aa).

One can recognise a TGS domain in the interval methionine 1 to threonine 60. The interval aspartate 248–proline 544 is catalytic. Cysteine 341, histidine 392, and histidine 521 together coordinate Zn(2+).

Belongs to the class-II aminoacyl-tRNA synthetase family. Homodimer. It depends on Zn(2+) as a cofactor.

The protein resides in the cytoplasm. It carries out the reaction tRNA(Thr) + L-threonine + ATP = L-threonyl-tRNA(Thr) + AMP + diphosphate + H(+). Functionally, catalyzes the attachment of threonine to tRNA(Thr) in a two-step reaction: L-threonine is first activated by ATP to form Thr-AMP and then transferred to the acceptor end of tRNA(Thr). Also edits incorrectly charged L-seryl-tRNA(Thr). This is Threonine--tRNA ligase from Deinococcus radiodurans (strain ATCC 13939 / DSM 20539 / JCM 16871 / CCUG 27074 / LMG 4051 / NBRC 15346 / NCIMB 9279 / VKM B-1422 / R1).